Here is a 789-residue protein sequence, read N- to C-terminus: Probable 3-hydroxyacyl-CoA dehydrogenase (789 aa).

It belongs to the 3-hydroxyacyl-CoA dehydrogenase family.

It carries out the reaction a (3S)-3-hydroxyacyl-CoA + NAD(+) = a 3-oxoacyl-CoA + NADH + H(+). It participates in lipid metabolism; fatty acid beta-oxidation. Functionally, involved in the degradation of long-chain fatty acids. This chain is Probable 3-hydroxyacyl-CoA dehydrogenase (fadN), found in Bacillus subtilis (strain 168).